Reading from the N-terminus, the 257-residue chain is Large ribosomal subunit protein uL2 (257 aa).

Residues 207–226 (VEHPFGGGNHQHIGKPSTIR) are disordered.

Belongs to the universal ribosomal protein uL2 family. As to quaternary structure, component of the large ribosomal subunit.

The protein localises to the cytoplasm. Functionally, component of the large ribosomal subunit. The ribosome is a large ribonucleoprotein complex responsible for the synthesis of proteins in the cell. The polypeptide is Large ribosomal subunit protein uL2 (rpl8) (Ictalurus punctatus (Channel catfish)).